The chain runs to 501 residues: DELTA-alicitoxin-Pse2a (501 aa).

Positions 1 to 22 (MSPYFKLSSALIFLAITMEALC) are cleaved as a signal peptide. Positions 23–35 (SPIENTSTSNKDN) are excised as a propeptide. Residues 23–359 (SPIENTSTSN…GFLHFGCSYL (337 aa)) form the MACPF domain. Residues 135 to 159 (AAVTNNIASSEEEVQGLSLNLKAYS) are a coiled coil. An EGF-like domain is found at 388–422 (VCKVGPEGCQHHEDCHYRAAFWCECGGPYDLARTC). 3 disulfide bridges follow: Cys-389–Cys-402, Cys-396–Cys-410, and Cys-412–Cys-422.

The protein localises to the secreted. The protein resides in the nematocyst. In terms of biological role, causes lethal toxicity to the shrimp Palaemon paucidence, and hemolytic activity toward sheep red blood cells. The chain is DELTA-alicitoxin-Pse2a from Phyllodiscus semoni (Night anemone).